Reading from the N-terminus, the 152-residue chain is Ribonuclease pancreatic (152 aa).

Residues M1–G24 form the signal peptide. Substrate contacts are provided by K31 and R34. H36 functions as the Proton acceptor in the catalytic mechanism. N46 is a glycosylation site (N-linked (GlcNAc...) asparagine). 4 cysteine pairs are disulfide-bonded: C50/C108, C64/C119, C82/C134, and C89/C96. Residues K65–T69, K90, and R109 contribute to the substrate site. An N-linked (GlcNAc...) asparagine glycan is attached at N112. H143 serves as the catalytic Proton donor.

This sequence belongs to the pancreatic ribonuclease family. Monomer. Interacts with and forms tight 1:1 complexes with RNH1. Dimerization of two such complexes may occur. Interaction with RNH1 inhibits this protein.

The protein resides in the secreted. It catalyses the reaction an [RNA] containing cytidine + H2O = an [RNA]-3'-cytidine-3'-phosphate + a 5'-hydroxy-ribonucleotide-3'-[RNA].. It carries out the reaction an [RNA] containing uridine + H2O = an [RNA]-3'-uridine-3'-phosphate + a 5'-hydroxy-ribonucleotide-3'-[RNA].. In terms of biological role, endonuclease that catalyzes the cleavage of RNA on the 3' side of pyrimidine nucleotides. Acts on single-stranded and double-stranded RNA. The sequence is that of Ribonuclease pancreatic (RNASE1) from Papio hamadryas (Hamadryas baboon).